A 186-amino-acid chain; its full sequence is Ribosome-recycling factor (186 aa).

This sequence belongs to the RRF family.

The protein resides in the cytoplasm. In terms of biological role, responsible for the release of ribosomes from messenger RNA at the termination of protein biosynthesis. May increase the efficiency of translation by recycling ribosomes from one round of translation to another. The sequence is that of Ribosome-recycling factor from Chlorobaculum parvum (strain DSM 263 / NCIMB 8327) (Chlorobium vibrioforme subsp. thiosulfatophilum).